The following is a 59-amino-acid chain: Large ribosomal subunit protein bL32 (59 aa).

Residues Met-1–Asp-20 are disordered. A compositionally biased stretch (basic residues) spans Lys-7–His-19.

It belongs to the bacterial ribosomal protein bL32 family.

This is Large ribosomal subunit protein bL32 from Wigglesworthia glossinidia brevipalpis.